Here is a 696-residue protein sequence, read N- to C-terminus: DNA ligase (696 aa).

NAD(+)-binding positions include 36–40 (DAEYD), 85–86 (SL), and glutamate 123. Residue lysine 125 is the N6-AMP-lysine intermediate of the active site. NAD(+) contacts are provided by arginine 146, glutamate 181, lysine 319, and lysine 343. Residues cysteine 437, cysteine 440, cysteine 455, and cysteine 461 each contribute to the Zn(2+) site. The BRCT domain maps to 618–696 (PEGTSLAGKT…EDGLKALLGL (79 aa)).

The protein belongs to the NAD-dependent DNA ligase family. LigA subfamily. Mg(2+) is required as a cofactor. The cofactor is Mn(2+).

It catalyses the reaction NAD(+) + (deoxyribonucleotide)n-3'-hydroxyl + 5'-phospho-(deoxyribonucleotide)m = (deoxyribonucleotide)n+m + AMP + beta-nicotinamide D-nucleotide.. DNA ligase that catalyzes the formation of phosphodiester linkages between 5'-phosphoryl and 3'-hydroxyl groups in double-stranded DNA using NAD as a coenzyme and as the energy source for the reaction. It is essential for DNA replication and repair of damaged DNA. In Bordetella pertussis (strain Tohama I / ATCC BAA-589 / NCTC 13251), this protein is DNA ligase.